Here is a 274-residue protein sequence, read N- to C-terminus: Large ribosomal subunit protein uL2 (274 aa).

The disordered stretch occupies residues 224-274 (VAMNPVDHPHGGGEGRTSGGRHPVTPWGIPTKGYKTRRNKRSNKLIVQKRK). The segment covering 257–274 (YKTRRNKRSNKLIVQKRK) has biased composition (basic residues).

It belongs to the universal ribosomal protein uL2 family. As to quaternary structure, part of the 50S ribosomal subunit. Forms a bridge to the 30S subunit in the 70S ribosome.

One of the primary rRNA binding proteins. Required for association of the 30S and 50S subunits to form the 70S ribosome, for tRNA binding and peptide bond formation. It has been suggested to have peptidyltransferase activity; this is somewhat controversial. Makes several contacts with the 16S rRNA in the 70S ribosome. The sequence is that of Large ribosomal subunit protein uL2 from Francisella tularensis subsp. holarctica (strain FTNF002-00 / FTA).